The following is a 238-amino-acid chain: Large ribosomal subunit protein uL3 (238 aa).

It belongs to the universal ribosomal protein uL3 family. As to quaternary structure, part of the 50S ribosomal subunit. Forms a cluster with proteins L14 and L19.

Its function is as follows. One of the primary rRNA binding proteins, it binds directly near the 3'-end of the 23S rRNA, where it nucleates assembly of the 50S subunit. This chain is Large ribosomal subunit protein uL3, found in Mesoplasma florum (strain ATCC 33453 / NBRC 100688 / NCTC 11704 / L1) (Acholeplasma florum).